The primary structure comprises 418 residues: AP-3 complex subunit mu-1 (418 aa).

An MHD domain is found at 176 to 417; sequence NNEAYFDVVE…VTKAGKFQVR (242 aa).

It belongs to the adaptor complexes medium subunit family. In terms of assembly, adaptor protein complex 3 (AP-3) is a heterotetramer composed of two large adaptins (delta-type subunit AP3D1 and beta-type subunit AP3B1 or AP3B2), a medium adaptin (mu-type subunit AP3M1 or AP3M2) and a small adaptin (sigma-type subunit APS1 or AP3S2). Interacts with AGAP1. AP-3 associates with the BLOC-1 complex. As to quaternary structure, (Microbial infection) Interacts with human respiratory virus (HRSV) matrix protein; this interaction plays an essential role in trafficking the matrix protein in host cells.

Its subcellular location is the golgi apparatus. The protein resides in the cytoplasmic vesicle membrane. In terms of biological role, part of the AP-3 complex, an adaptor-related complex which is not clathrin-associated. The complex is associated with the Golgi region as well as more peripheral structures. It facilitates the budding of vesicles from the Golgi membrane and may be directly involved in trafficking to lysosomes. In concert with the BLOC-1 complex, AP-3 is required to target cargos into vesicles assembled at cell bodies for delivery into neurites and nerve terminals. This Homo sapiens (Human) protein is AP-3 complex subunit mu-1 (AP3M1).